A 616-amino-acid chain; its full sequence is Chaperone protein HscA (616 aa).

This sequence belongs to the heat shock protein 70 family.

Its function is as follows. Chaperone involved in the maturation of iron-sulfur cluster-containing proteins. Has a low intrinsic ATPase activity which is markedly stimulated by HscB. Involved in the maturation of IscU. In Klebsiella pneumoniae (strain 342), this protein is Chaperone protein HscA.